The following is a 293-amino-acid chain: ELMO domain-containing protein 2 (293 aa).

The ELMO domain maps to 126–282 (QHEELLMKLW…KFHEKIKGLL (157 aa)).

As to expression, alveolar cells (morphologically type II cells) and alveolar macrophages (at protein level). Expressed in brain, colon, heart, kidney, liver, lung, muscle, placenta, small intestine, spleen, stomach and testis. In lung it is expressed in alveolar macrophages and alveolar walls.

In terms of biological role, acts as a GTPase-activating protein (GAP) toward guanine nucleotide exchange factors like ARL2, ARL3, ARF1 and ARF6, but not for GTPases outside the Arf family. Regulates IFN-related antiviral responses. The chain is ELMO domain-containing protein 2 (ELMOD2) from Homo sapiens (Human).